Reading from the N-terminus, the 236-residue chain is Small ribosomal subunit protein uS2c (236 aa).

Belongs to the universal ribosomal protein uS2 family.

It is found in the plastid. It localises to the chloroplast. This chain is Small ribosomal subunit protein uS2c (rps2), found in Morus indica (Mulberry).